The sequence spans 83 residues: Glutaredoxin 3 (83 aa).

In terms of domain architecture, Glutaredoxin spans 2 to 83; it reads ANVEIYTKET…ARGGLDPLLK (82 aa). A disulfide bond links Cys-12 and Cys-15.

It belongs to the glutaredoxin family. In terms of assembly, monomer.

In terms of biological role, the disulfide bond functions as an electron carrier in the glutathione-dependent synthesis of deoxyribonucleotides by the enzyme ribonucleotide reductase. In addition, it is also involved in reducing some disulfides in a coupled system with glutathione reductase. This is Glutaredoxin 3 (grxC) from Escherichia coli O157:H7.